The following is a 1822-amino-acid chain: ADP-ribosylation factor guanine nucleotide-exchange factor sec72 (1822 aa).

Disordered regions lie at residues 1–54 and 66–126; these read MQDA…NGMD and DAVV…RASL. S44 carries the post-translational modification Phosphoserine. Over residues 72–84 the composition is skewed to polar residues; that stretch reads DINTEDSSLSPAK. Basic and acidic residues predominate over residues 85–110; it reads QENEKSPEGIEQKYQEEDLKDDKKSN. Phosphoserine occurs at positions 122 and 125. Positions 547-551 match the HUS box motif; the sequence is NYDCD. At T597 the chain carries Phosphothreonine. Residue S653 is modified to Phosphoserine. Phosphothreonine is present on T654. S669 bears the Phosphoserine mark. Residues 701–889 form the SEC7 domain; that stretch reads QFESNKQRKK…GFVYDDILKN (189 aa). The tract at residues 898–1106 is HDS1 domain; that stretch reads ELAAIAPLMN…NARVRRKNVN (209 aa). S1110 is modified (phosphoserine). Disordered regions lie at residues 1111–1131 and 1584–1610; these read NSIR…SLSK and ENEN…TSSI. Composition is skewed to low complexity over residues 1117-1130 and 1597-1610; these read SGST…RSLS and SLPE…TSSI. A phosphoserine mark is found at S1606 and S1609.

It localises to the cytoplasm. It is found in the golgi apparatus. Its subcellular location is the trans-Golgi network. The protein resides in the cytoplasmic vesicle. The protein localises to the COPI-coated vesicle membrane. It localises to the COPII-coated vesicle membrane. Its function is as follows. Guanine exchange factor that acts as an activator of arf1 at the trans-Golgi net-work and is thus involved in vesicular budding and traffic between compartments of the Golgi apparatus. Activation of Arf (ADP-ribosylation factor) GTPases is essential for vesicle formation via recruitment of cargo adapters and coat proteins necessary for Golgi trafficking. Involved in the resistance to tamoxifen (TAM), an anticancer drug used to treat estrogen receptor (ER)-positive breast cancer. In Schizosaccharomyces pombe (strain 972 / ATCC 24843) (Fission yeast), this protein is ADP-ribosylation factor guanine nucleotide-exchange factor sec72.